Reading from the N-terminus, the 120-residue chain is Non-specific lipid-transfer protein 1 (120 aa).

The first 25 residues, 1 to 25, serve as a signal peptide directing secretion; it reads MARSMKLACVALVICMVVIAPMAEA. Intrachain disulfides connect Cys29–Cys78, Cys39–Cys55, Cys56–Cys101, and Cys76–Cys115. Residue Phe120 is a propeptide.

This sequence belongs to the plant LTP family. In terms of tissue distribution, expressed in roots, stem, leaves and tendrils of the mature plant.

Its function is as follows. Plant non-specific lipid-transfer proteins transfer phospholipids as well as galactolipids across membranes. May play a role in wax or cutin deposition in the cell walls of expanding epidermal cells and certain secretory tissues. Binds saturated and unsaturated lipids, jasmonic acid and lysolipids. Has antifungal activity against A.niger VKM F-2259 (IC(50)=40 uM), F.oxysporum TCXA-4 (IC(50)=20-40), F.solani VKM F-142 (IC(50)=20-40 uM) and N.crassa VKM F-184 (IC(50)=40 uM). Has weak antibacterial activity against A.tumefaciens A281, C.michiganensis VKM Ac-1144 and P.syringae VKM B-1546. This is Non-specific lipid-transfer protein 1 from Pisum sativum (Garden pea).